Consider the following 114-residue polypeptide: Ribosome-binding factor A (114 aa).

Belongs to the RbfA family. As to quaternary structure, monomer. Binds 30S ribosomal subunits, but not 50S ribosomal subunits or 70S ribosomes.

Its subcellular location is the cytoplasm. Its function is as follows. One of several proteins that assist in the late maturation steps of the functional core of the 30S ribosomal subunit. Associates with free 30S ribosomal subunits (but not with 30S subunits that are part of 70S ribosomes or polysomes). Required for efficient processing of 16S rRNA. May interact with the 5'-terminal helix region of 16S rRNA. In Vesicomyosocius okutanii subsp. Calyptogena okutanii (strain HA), this protein is Ribosome-binding factor A.